The primary structure comprises 526 residues: Triacylglycerol lipase OBL1 (526 aa).

A helical membrane pass occupies residues 79–99; sequence GHLTDFLLNFYYQNHGFLGIL. The GXSXG signature appears at 338–342; it reads GHSLG. The Nucleophile role is filled by Ser340. Residues Asp404 and His497 each act as charge relay system in the active site.

It belongs to the AB hydrolase superfamily. Lipase family.

The protein resides in the membrane. The catalysed reaction is a triacylglycerol + H2O = a diacylglycerol + a fatty acid + H(+). Functionally, acid lipase that can hydrolyze a range of triacylglycerols but is not active on phospholipids. In vitro, hydrolyzes triolein, trilinolein, triricinolein, tripalmitin, trilaurin and tricaprin. May play a role in the regulation of lipolysis in germinating seeds. In Ricinus communis (Castor bean), this protein is Triacylglycerol lipase OBL1.